Here is a 261-residue protein sequence, read N- to C-terminus: Putative methyltransferase MJ0046 (261 aa).

Belongs to the methyltransferase superfamily.

This chain is Putative methyltransferase MJ0046, found in Methanocaldococcus jannaschii (strain ATCC 43067 / DSM 2661 / JAL-1 / JCM 10045 / NBRC 100440) (Methanococcus jannaschii).